The primary structure comprises 276 residues: Large ribosomal subunit protein uL2 (276 aa).

Residues 221–276 (RGSAMNPNDHPHGGGEGRAPIGRKSPMTPWGKKARGIKTRDRKKSSNELIIRRRTK) are disordered. A compositionally biased stretch (basic residues) spans 252–263 (KKARGIKTRDRK).

Belongs to the universal ribosomal protein uL2 family. As to quaternary structure, part of the 50S ribosomal subunit. Forms a bridge to the 30S subunit in the 70S ribosome.

Functionally, one of the primary rRNA binding proteins. Required for association of the 30S and 50S subunits to form the 70S ribosome, for tRNA binding and peptide bond formation. It has been suggested to have peptidyltransferase activity; this is somewhat controversial. Makes several contacts with the 16S rRNA in the 70S ribosome. In Phytoplasma australiense, this protein is Large ribosomal subunit protein uL2.